Here is a 367-residue protein sequence, read N- to C-terminus: Small ribosomal subunit biogenesis GTPase RsgA (367 aa).

Positions A112–L267 constitute a CP-type G domain. GTP contacts are provided by residues N157–D160 and G209–T217. Residues C291, C296, H298, and C304 each contribute to the Zn(2+) site.

It belongs to the TRAFAC class YlqF/YawG GTPase family. RsgA subfamily. Monomer. Associates with 30S ribosomal subunit, binds 16S rRNA. Zn(2+) is required as a cofactor.

The protein resides in the cytoplasm. One of several proteins that assist in the late maturation steps of the functional core of the 30S ribosomal subunit. Helps release RbfA from mature subunits. May play a role in the assembly of ribosomal proteins into the subunit. Circularly permuted GTPase that catalyzes slow GTP hydrolysis, GTPase activity is stimulated by the 30S ribosomal subunit. This is Small ribosomal subunit biogenesis GTPase RsgA from Opitutus terrae (strain DSM 11246 / JCM 15787 / PB90-1).